The following is a 410-amino-acid chain: Platelet-activating factor acetylhydrolase IB subunit alpha (410 aa).

The tract at residues 1–38 (MVLSQRQRDELNRAIADYLRSNGYEEAYSVFKKEAELD) is required for self-association and interaction with PAFAH1B2 and PAFAH1B3. The interval 1-66 (MVLSQRQRDE…SVIRLQKKVM (66 aa)) is interaction with NDE1. Positions 1–102 (MVLSQRQRDE…EWIPRPPEKY (102 aa)) are interaction with NDEL1. The 33-residue stretch at 7–39 (QRDELNRAIADYLRSNGYEEAYSVFKKEAELDM) folds into the LisH domain. Residue K53 is modified to N6-acetyllysine. The stretch at 56–82 (TSVIRLQKKVMELESKLNEAKEEFTSG) forms a coiled coil. Residues 83–410 (GPLGQKRDPK…DQTVKVWECR (328 aa)) form an interaction with dynein and dynactin region. WD repeat units follow at residues 106–147 (GHRS…RTLK), 148–187 (GHTD…CIRT), 190–229 (GHDH…CVKT), 232–271 (GHRE…CKAE), 274–333 (EHEH…CLMT), 336–377 (GHDN…KTLN), and 378–410 (AHEH…WECR). S109 bears the Phosphoserine mark. An interaction with DCX region spans residues 367-409 (YKNKRCMKTLNAHEHFVTSLDFHKTAPYVVTGSVDQTVKVWEC). The segment at 388-410 (FHKTAPYVVTGSVDQTVKVWECR) is interaction with NDEL1.

It belongs to the WD repeat LIS1/nudF family. Can self-associate. Component of the cytosolic PAF-AH (I) heterotetrameric enzyme, which is composed of PAFAH1B1 (beta), PAFAH1B2 (alpha2) and PAFAH1B3 (alpha1) subunits. The catalytic activity of the enzyme resides in the alpha1 (PAFAH1B3) and alpha2 (PAFAH1B2) subunits, whereas the beta subunit (PAFAH1B1) has regulatory activity. Trimer formation is not essential for the catalytic activity. Interacts with the catalytic dimer of PAF-AH (I) heterotetrameric enzyme: interacts with PAFAH1B2 homodimer (alpha2/alpha2 homodimer), PAFAH1B3 homodimer (alpha1/alpha1 homodimer) and PAFAH1B2-PAFAH1B3 heterodimer (alpha2/alpha1 heterodimer). Interacts with DCX, dynein, dynactin, IQGAP1, KATNB1, NDE1, NDEL1, NUDC and RSN. Interacts with DISC1, and this interaction is enhanced by NDEL1. Interacts with DAB1 when DAB1 is phosphorylated in response to RELN/reelin signaling. Interacts with INTS13. Interacts with DCDC1.

It localises to the cytoplasm. The protein resides in the cytoskeleton. The protein localises to the microtubule organizing center. Its subcellular location is the centrosome. It is found in the spindle. It localises to the nucleus membrane. Its function is as follows. Regulatory subunit (beta subunit) of the cytosolic type I platelet-activating factor (PAF) acetylhydrolase (PAF-AH (I)), an enzyme that catalyzes the hydrolyze of the acetyl group at the sn-2 position of PAF and its analogs and participates in PAF inactivation. Regulates the PAF-AH (I) activity in a catalytic dimer composition-dependent manner. Positively regulates the activity of the minus-end directed microtubule motor protein dynein. May enhance dynein-mediated microtubule sliding by targeting dynein to the microtubule plus end. Required for several dynein- and microtubule-dependent processes such as the maintenance of Golgi integrity, the peripheral transport of microtubule fragments and the coupling of the nucleus and centrosome. Required during brain development for the proliferation of neuronal precursors and the migration of newly formed neurons from the ventricular/subventricular zone toward the cortical plate. Neuronal migration involves a process called nucleokinesis, whereby migrating cells extend an anterior process into which the nucleus subsequently translocates. During nucleokinesis dynein at the nuclear surface may translocate the nucleus towards the centrosome by exerting force on centrosomal microtubules. Also required for proper activation of Rho GTPases and actin polymerization at the leading edge of locomoting cerebellar neurons and postmigratory hippocampal neurons in response to calcium influx triggered via NMDA receptors. May also play a role in other forms of cell locomotion including the migration of fibroblasts during wound healing. Required for dynein recruitment to microtubule plus ends and BICD2-bound cargos. May modulate the Reelin pathway through interaction of the PAF-AH (I) catalytic dimer with VLDLR. This is Platelet-activating factor acetylhydrolase IB subunit alpha from Macaca fascicularis (Crab-eating macaque).